Reading from the N-terminus, the 513-residue chain is Bone morphogenetic protein 6 (513 aa).

The first 20 residues, 1–20 (MPGLGRRAQWLCWWWGLLCS), serve as a signal peptide directing secretion. A propeptide spanning residues 21–374 (CCGPPPLRPP…VSEVHVRTTR (354 aa)) is cleaved from the precursor. Disordered regions lie at residues 38-66 (AAGG…SSGF), 89-131 (LPHR…RLKS), and 145-200 (ADND…ASPL). Over residues 98–121 (GLQQPQPPALRQQEEQQQQQQLPR) the composition is skewed to low complexity. The span at 158-172 (QQSWPHEAASSSQRR) shows a compositional bias: polar residues. N-linked (GlcNAc...) asparagine glycans are attached at residues Asn-241, Asn-269, Asn-386, Asn-404, and Asn-454. Positions 373-398 (TRSASSRRRQQSRNRSTQSQDVARVS) are disordered. 3 cysteine pairs are disulfide-bonded: Cys-412/Cys-478, Cys-441/Cys-510, and Cys-445/Cys-512.

Belongs to the TGF-beta family. In terms of assembly, interacts with SOSTDC1. Interacts (when glycosylated) with type I receptor ACVR1; the interaction may induce HAMP expression. Interacts with type II receptor ACVR2B. Interacts with Hemojuvelin/HJV. Interacts with ERFE; the interaction inhibits BMP-induced transcription of HAMP. Interacts with BMPR1A/ALK3. Forms heterodimers with BMP2 in vitro; the heterodimer then binds to its receptor BMPR1A /ALK3 and may induce HAMP expression. Glycosylated at Asn-454. Glycosylation is crucial for recognition by the activin receptor type I/ACVR1.

The protein localises to the secreted. In terms of biological role, growth factor of the TGF-beta superfamily that plays essential roles in many developmental processes including cartilage and bone formation. Also plays an important role in the regulation of HAMP/hepcidin expression and iron metabolism by acting as a ligand for hemojuvelin/HJV. Also acts to promote expression of HAMP, potentially via the interaction with its receptor BMPR1A/ALK3. Initiates the canonical BMP signaling cascade by associating with type I receptor ACVR1 and type II receptor ACVR2B. In turn, ACVR1 propagates signal by phosphorylating SMAD1/5/8 that travel to the nucleus and act as activators and repressors of transcription of target. Can also signal through non-canonical pathway such as TAZ-Hippo signaling cascade to modulate VEGF signaling by regulating VEGFR2 expression. The protein is Bone morphogenetic protein 6 (BMP6) of Homo sapiens (Human).